We begin with the raw amino-acid sequence, 379 residues long: Stimulator of interferon genes protein (379 aa).

Over 1 to 23 (MPQDPSTRSSPARLLIPEPRAGR) the chain is Cytoplasmic. A helical transmembrane segment spans residues 24–40 (ARHAACVLLAVCFVVLF). Over 41–50 (LSGEPLAPII) the chain is Lumenal. Residues 51–75 (RSVCTQLAALQLGVLLKGCCCLAEE) form a helical membrane-spanning segment. Over 76–97 (IFHLHSRHHGSLWQVLCSCFPP) the chain is Cytoplasmic. A helical membrane pass occupies residues 98 to 111 (RWYLALLLVGGSAY). At 112-121 (LDPPEDNGHS) the chain is on the lumenal side. A helical transmembrane segment spans residues 122–139 (PRLALTLSCLCQLLVLAL). At 140–379 (GLQKLSAVEV…LPQPLRSDCP (240 aa)) the chain is on the cytoplasmic side. The cyclic dinucleotide-binding domain (CBD) stretch occupies residues 158–345 (KNVAHGLAWS…WHLQQQQREE (188 aa)). 3',3'-c-di-GMP-binding positions include serine 167, tyrosine 172, 243-246 (RVYK), and serine 268. 2',3'-cGAMP-binding positions include 167–172 (SYYIGY), 243–246 (RVYK), and serine 268. The pLxIS motif motif lies at 363-366 (LQVS). At serine 366 the chain carries Phosphoserine; by TBK1.

This sequence belongs to the STING family. As to quaternary structure, homodimer; forms a homodimer in absence of cyclic nucleotide (c-di-GMP or cGAMP). Homotetramer; in presence of cyclic nucleotide (c-di-GMP or cGAMP), forms tetramers and higher-order oligomers through side-by-side packing. Interacts (when phosphorylated) with IRF3; following activation and phosphorylation on the pLxIS motif by TBK1, recruits IRF3. In terms of processing, phosphorylation by TBK1 leads to activation and production of IFN-beta. Following cyclic nucleotide (c-di-GMP or cGAMP)-binding, activation and translocation from the endoplasmic reticulum, STING1 is phosphorylated by TBK1 at Ser-366 in the pLxIS motif. The phosphorylated pLxIS motif constitutes an IRF3-binding motif, leading to recruitment of the transcription factor IRF3 to induce type-I interferons and other cytokines.

Its subcellular location is the endoplasmic reticulum membrane. The protein resides in the cytoplasm. The protein localises to the perinuclear region. It localises to the endoplasmic reticulum-Golgi intermediate compartment membrane. It is found in the golgi apparatus membrane. Its subcellular location is the cytoplasmic vesicle. The protein resides in the autophagosome membrane. It catalyses the reaction H(+)(in) = H(+)(out). Its function is as follows. Facilitator of innate immune signaling that acts as a sensor of cytosolic DNA from bacteria and viruses and promotes the production of type I interferon (IFN-alpha and IFN-beta). Innate immune response is triggered in response to non-CpG double-stranded DNA from viruses and bacteria delivered to the cytoplasm. Acts by binding cyclic dinucleotides: recognizes and binds cyclic di-GMP (c-di-GMP), a second messenger produced by bacteria, and cyclic GMP-AMP (cGAMP), a messenger produced by CGAS in response to DNA virus in the cytosol. Upon binding of c-di-GMP or cGAMP, STING1 oligomerizes and is able to activate both NF-kappa-B and IRF3 transcription pathways to induce expression of type I interferon and exert a potent anti-viral state. Exhibits 2',3' phosphodiester linkage-specific ligand recognition: can bind both 2'-3' linked cGAMP and 3'-3' linked cGAMP but is preferentially activated by 2'-3' linked cGAMP. In addition to promote the production of type I interferons, plays a direct role in autophagy. Following cGAMP-binding, STING1 buds from the endoplasmic reticulum into COPII vesicles, which then form the endoplasmic reticulum-Golgi intermediate compartment (ERGIC). The ERGIC serves as the membrane source for LC3 lipidation, leading to formation of autophagosomes that target cytosolic DNA or DNA viruses for degradation by the lysosome. Promotes autophagy by acting as a proton channel that directs proton efflux from the Golgi to facilitate LC3 lipidation. The autophagy- and interferon-inducing activities can be uncoupled and autophagy induction is independent of TBK1 phosphorylation. This chain is Stimulator of interferon genes protein, found in Gallus gallus (Chicken).